Here is a 190-residue protein sequence, read N- to C-terminus: Selenoprotein S (190 aa).

The helical transmembrane segment at 28 to 48 (SLLATYGWYIVFCCILLYVVF) threads the bilayer. Residues 78-90 (RQEALAAARLKMQ) form a VCP/p97-interacting motif (VIM) region. Positions 115-138 (KIERWDSVQEGRSYRGDARKRQEE) are enriched in basic and acidic residues. Positions 115-190 (KIERWDSVQE…RRGPSSGGUG (76 aa)) are disordered. Ser-140 is subject to Phosphoserine. Residues 160 to 174 (RGGGYNPLSGEGGGA) are compositionally biased toward gly residues. Sec-189 is a non-standard amino acid (selenocysteine).

The protein belongs to the selenoprotein S family. As to quaternary structure, interacts with DERL1 and (via VIM motif) with VCP, suggesting that it forms a membrane complex with DERL1 that serves as a receptor for VCP. Also interacts with DERL2, DERL3 and SELENOK. The SELENOK-SELENOS complex interacts with VCP. In terms of processing, truncated SELENOS proteins produced by failed UGA/Sec decoding are ubiquitinated by the CRL2(KLHDC2) and CRL2(KLHDC3) complexes, which recognizes the glycine (Gly) at the C-terminus of truncated SELENOS proteins. Truncated SELENOS proteins produced by failed UGA/Sec decoding are also ubiquitinated by the CRL5(KLHDC1) complex. As to expression, ubiquitously expressed. Highest expression in liver and lung, with lower levels detected in spleen, kidney, brain, lymph nodes, small intestine, stomach and heart. Very low expression detected in longissimus dorsi.

It localises to the cytoplasm. Its subcellular location is the endoplasmic reticulum membrane. Its function is as follows. Involved in the degradation process of misfolded endoplasmic reticulum (ER) luminal proteins. Participates in the transfer of misfolded proteins from the ER to the cytosol, where they are destroyed by the proteasome in a ubiquitin-dependent manner. Probably acts by serving as a linker between DERL1, which mediates the retrotranslocation of misfolded proteins into the cytosol, and the ATPase complex VCP, which mediates the translocation and ubiquitination. This is Selenoprotein S from Sus scrofa (Pig).